Reading from the N-terminus, the 466-residue chain is Prophage integrase IntF (466 aa).

The region spanning 134–239 (KTKVTFSVAW…LLRAFIKWSN (106 aa)) is the Core-binding (CB) domain. Residues 268–445 (KADDCLQKEQ…PLDLLRKWHE (178 aa)) enclose the Tyr recombinase domain. Residues Arg-306, Lys-328, His-396, Arg-399, and His-422 contribute to the active site. The O-(3'-phospho-DNA)-tyrosine intermediate role is filled by Tyr-432.

This sequence belongs to the 'phage' integrase family.

In terms of biological role, integrase is necessary for integration of the phage into the host genome by site-specific recombination. In conjunction with excisionase, integrase is also necessary for excision of the prophage from the host genome. The sequence is that of Prophage integrase IntF (intF) from Escherichia coli (strain K12).